A 169-amino-acid chain; its full sequence is Peptide deformylase (169 aa).

2 residues coordinate Fe cation: C91 and H133. E134 is an active-site residue. H137 is a binding site for Fe cation.

Belongs to the polypeptide deformylase family. It depends on Fe(2+) as a cofactor.

It catalyses the reaction N-terminal N-formyl-L-methionyl-[peptide] + H2O = N-terminal L-methionyl-[peptide] + formate. Removes the formyl group from the N-terminal Met of newly synthesized proteins. Requires at least a dipeptide for an efficient rate of reaction. N-terminal L-methionine is a prerequisite for activity but the enzyme has broad specificity at other positions. The sequence is that of Peptide deformylase from Citrobacter koseri (strain ATCC BAA-895 / CDC 4225-83 / SGSC4696).